Reading from the N-terminus, the 374-residue chain is Probable tuliposide A-converting enzyme b6, amyloplastic (374 aa).

Residues 1 to 68 constitute an amyloplast transit peptide; it reads MSVALFCGPP…TNSSLSPSPT (68 aa). Residue S226 is the Acyl-ester intermediate of the active site. Catalysis depends on charge relay system residues D316 and H348.

This sequence belongs to the AB hydrolase superfamily. In terms of assembly, homodimer.

It localises to the plastid. It is found in the amyloplast. It carries out the reaction 6-tuliposide A = tulipalin A + D-glucose. Functionally, lactone-forming carboxylesterases, specifically catalyzing intramolecular transesterification, but not hydrolysis. Involved in the biosynthesis of tulipalins, defensive chemicals that show antimicrobial activities against a broad range of strains of bacteria and fungi. Substrates are 6-tuliposide A &gt; 6-tuliposide B. The chain is Probable tuliposide A-converting enzyme b6, amyloplastic (TCEA-B6) from Tulipa gesneriana (Garden tulip).